Reading from the N-terminus, the 362-residue chain is Ferrochelatase (362 aa).

Residues H228 and E309 each contribute to the Fe cation site.

The protein belongs to the ferrochelatase family.

The protein localises to the cytoplasm. The catalysed reaction is heme b + 2 H(+) = protoporphyrin IX + Fe(2+). It participates in porphyrin-containing compound metabolism; protoheme biosynthesis; protoheme from protoporphyrin-IX: step 1/1. Its function is as follows. Catalyzes the ferrous insertion into protoporphyrin IX. This Bordetella parapertussis (strain 12822 / ATCC BAA-587 / NCTC 13253) protein is Ferrochelatase.